A 438-amino-acid chain; its full sequence is Protein DAY-LENGTH-DEPENDENT DELAYED-GREENING 1, chloroplastic (438 aa).

Residues M1 to P54 constitute a chloroplast transit peptide. Helical transmembrane passes span F216–L236, A314–A334, A359–E379, and I398–F418.

Belongs to the CemA family.

It localises to the plastid. The protein localises to the chloroplast envelope. It is found in the chloroplast membrane. It carries out the reaction K(+)(in) + H(+)(out) = K(+)(out) + H(+)(in). The enzyme catalyses Ca(2+)(in) + H(+)(out) = Ca(2+)(out) + H(+)(in). Promotes K(+)/H(+) antiport activity supporting K(+) efflux to control H(+) homeostasis in chloroplasts. Also able to ensure Ca(2+)/H(+) antiport activity in vitro. Essential for chloroplast pH regulation and optimization of non-photochemical quenching (NPQ), a regulatory mechanism that dissipates excess light energy; acts downstream of PSBS but independently from PGR5 and FLAP1. This Arabidopsis thaliana (Mouse-ear cress) protein is Protein DAY-LENGTH-DEPENDENT DELAYED-GREENING 1, chloroplastic.